Consider the following 204-residue polypeptide: Hydrophilin YNL190W (204 aa).

An N-terminal signal peptide occupies residues 1–20 (MKFSSVTAITLATVATVATA). Low complexity predominate over residues 35–46 (SDGSLTTTTSTH). A disordered region spans residues 35–179 (SDGSLTTTTS…ARKNNAAPGP (145 aa)). Over residues 47–59 (TTHKYGKFNKTSK) the composition is skewed to basic residues. Residues Asn-55, Asn-64, Asn-75, Asn-84, Asn-95, Asn-104, Asn-115, Asn-124, Asn-135, Asn-144, and Asn-155 are each glycosylated (N-linked (GlcNAc...) asparagine). Over residues 67 to 79 (GTHKYGKFNKTSK) the composition is skewed to basic residues. Residues 87–99 (GTHKYGKFNKTSK) are compositionally biased toward basic residues. Residues 107–119 (GTHKYGKFNKTSK) show a composition bias toward basic residues. Residues 127 to 139 (GTHKYGKFNKTSK) are compositionally biased toward basic residues. The span at 147-156 (GTHKYGKFNK) shows a compositional bias: basic residues. Asn-174 carries GPI-anchor amidated asparagine lipidation. Positions 175 to 204 (AAPGPSNFNSIKLFGVTAGSAAVAGALLLL) are cleaved as a propeptide — removed in mature form.

Belongs to the PGA14 family. The GPI-anchor is attached to the protein in the endoplasmic reticulum and serves to target the protein to the cell surface. There, the glucosamine-inositol phospholipid moiety is cleaved off and the GPI-modified mannoprotein is covalently attached via its lipidless GPI glycan remnant to the 1,6-beta-glucan of the outer cell wall layer.

Its subcellular location is the secreted. The protein localises to the cell wall. It is found in the membrane. Functionally, hydrophilin which is essential to overcome the simple stress of the desiccation-rehydration process. This Saccharomyces cerevisiae (strain ATCC 204508 / S288c) (Baker's yeast) protein is Hydrophilin YNL190W.